The chain runs to 504 residues: AMP phosphorylase (504 aa).

AMP contacts are provided by residues Gly169, 195 to 200, and Thr204; that span reads SRAITS. The active-site Proton donor is the Asp257. AMP-binding residues include Ser265 and Lys289.

It belongs to the thymidine/pyrimidine-nucleoside phosphorylase family. Type 2 subfamily.

It carries out the reaction AMP + phosphate = alpha-D-ribose 1,5-bisphosphate + adenine. The enzyme catalyses CMP + phosphate = cytosine + alpha-D-ribose 1,5-bisphosphate. The catalysed reaction is UMP + phosphate = alpha-D-ribose 1,5-bisphosphate + uracil. Functionally, catalyzes the conversion of AMP and phosphate to adenine and ribose 1,5-bisphosphate (R15P). Exhibits phosphorylase activity toward CMP and UMP in addition to AMP. Functions in an archaeal AMP degradation pathway, together with R15P isomerase and RubisCO. This is AMP phosphorylase from Methanococcus aeolicus (strain ATCC BAA-1280 / DSM 17508 / OCM 812 / Nankai-3).